Consider the following 230-residue polypeptide: Germin-like protein 5-1 (230 aa).

The signal sequence occupies residues 1–20 (MAMVGRSLLLLLLLVTLAAG). A disulfide bridge connects residues cysteine 38 and cysteine 53. In terms of domain architecture, Cupin type-1 spans 86–219 (YGFTARSVDI…TLLTDEATVD (134 aa)). Mn(2+) contacts are provided by histidine 119, histidine 121, glutamate 126, and histidine 167. An N-linked (GlcNAc...) asparagine glycan is attached at asparagine 172.

Belongs to the germin family. Oligomer (believed to be a pentamer but probably hexamer).

It localises to the secreted. Its subcellular location is the extracellular space. The protein resides in the apoplast. In terms of biological role, may play a role in plant defense. Probably has no oxalate oxidase activity even if the active site is conserved. This Oryza sativa subsp. japonica (Rice) protein is Germin-like protein 5-1.